The primary structure comprises 138 residues: Phospholipase A2 homolog mojave toxin acidic chain (138 aa).

A signal peptide spans 1–40 (MRALWIVAVLLVGVEGSLVEFETLIMKIAGRSGISYYSSY). Cystine bridges form between Cys-42–Cys-131, Cys-44–Cys-60, Cys-59–Cys-111, Cys-65–Cys-138, Cys-66–Cys-104, Cys-73–Cys-97, and Cys-91–Cys-102. A propeptide spanning residues 81–83 (TYR) is cleaved from the precursor. The residue at position 84 (Gln-84) is a Pyrrolidone carboxylic acid. A propeptide spanning residues 120-126 (DYKYLRF) is cleaved from the precursor.

Belongs to the phospholipase A2 family. Group II subfamily. D49 sub-subfamily. In terms of assembly, heterodimer of an acidic and a basic chain. The acidic subunit is non-toxic, without enzymatic activity and comprises 3 peptides that are cross-linked by 5 disulfide bridges. The basic subunit is toxic, has phospholipase A2 activity and is composed of a single chain. The cofactor is Ca(2+). As to expression, expressed by the venom gland.

It is found in the secreted. Snake venom phospholipase A2 (PLA2) that inhibits neuromuscular transmission by blocking acetylcholine release from the nerve termini. The protein is Phospholipase A2 homolog mojave toxin acidic chain of Crotalus scutulatus scutulatus (Mojave rattlesnake).